We begin with the raw amino-acid sequence, 144 residues long: Austinoid biosynthesis clusters protein S (144 aa).

The protein belongs to the trt14 isomerase family. Homodimer.

Its pathway is secondary metabolite biosynthesis; terpenoid biosynthesis. Its function is as follows. Part of the gene cluster B that mediates the biosynthesis of the fungal meroterpenoid acetoxydehydroaustin. The first step of the pathway is the synthesis of 3,5-dimethylorsellinic acid by the polyketide synthase ausA. 3,5-dimethylorsellinic acid is then prenylated by the polyprenyl transferase ausN. Further epoxidation by the FAD-dependent monooxygenase ausM and cyclization by the probable terpene cyclase ausL lead to the formation of protoaustinoid A. Protoaustinoid A is then oxidized to spiro-lactone preaustinoid A3 by the combined action of the FAD-binding monooxygenases ausB and ausC, and the dioxygenase ausE. Acid-catalyzed keto-rearrangement and ring contraction of the tetraketide portion of preaustinoid A3 by ausJ lead to the formation of preaustinoid A4. The aldo-keto reductase ausK, with the help of ausH, is involved in the next step by transforming preaustinoid A4 into isoaustinone which is in turn hydroxylated by the P450 monooxygenase ausI to form austinolide. The cytochrome P450 monooxygenase ausG then modifies austinolide to austinol. Austinol is further acetylated to austin by the O-acetyltransferase ausP, which spontaneously changes to dehydroaustin. The cytochrome P450 monooxygenase then converts dehydroaustin is into 7-dehydrodehydroaustin. The hydroxylation catalyzed by ausR permits the second O-acetyltransferase ausQ to add an additional acetyl group to the molecule, leading to the formation of acetoxydehydroaustin. Due to genetic rearrangements of the clusters and the subsequent loss of some enzymes, the end product of the Penicillium brasilianum austinoid biosynthesis clusters is acetoxydehydroaustin. AusS is necessary for austinoids production and may play a possible function as a regulator. This chain is Austinoid biosynthesis clusters protein S, found in Penicillium brasilianum.